The sequence spans 711 residues: Polyribonucleotide nucleotidyltransferase (711 aa).

Residues Asp486 and Asp492 each contribute to the Mg(2+) site. The KH domain maps to 553-612 (PRIHTIKINPDKIKDVIGKGGSVIRALTEETGTTIEIEDDGTVKIAATDGEKAKHAIRRI). The region spanning 622-690 (GRVYNGKVTR…RQGRIRLSIK (69 aa)) is the S1 motif domain. Residues 690–711 (KEATEQSQPAAALEAPAAEQGE) are disordered. Positions 698–711 (PAAALEAPAAEQGE) are enriched in low complexity.

It belongs to the polyribonucleotide nucleotidyltransferase family. As to quaternary structure, component of the RNA degradosome, which is a multiprotein complex involved in RNA processing and mRNA degradation. Mg(2+) is required as a cofactor.

It is found in the cytoplasm. The enzyme catalyses RNA(n+1) + phosphate = RNA(n) + a ribonucleoside 5'-diphosphate. Functionally, involved in mRNA degradation. Catalyzes the phosphorolysis of single-stranded polyribonucleotides processively in the 3'- to 5'-direction. The chain is Polyribonucleotide nucleotidyltransferase from Escherichia coli O127:H6 (strain E2348/69 / EPEC).